A 78-amino-acid chain; its full sequence is Protein SlyX homolog (78 aa).

The protein belongs to the SlyX family.

This chain is Protein SlyX homolog, found in Xanthomonas campestris pv. campestris (strain 8004).